A 1608-amino-acid chain; its full sequence is Mitogen-activated protein kinase kinase kinase 4 (1608 aa).

Residues 1-23 (MREAAAALVPPPAFAVTPAAAME) show a composition bias toward low complexity. 2 disordered regions span residues 1–136 (MREA…ENVE) and 429–478 (IPSP…RQPI). Residues 24 to 37 (EPPPPPPPPPPPPE) are compositionally biased toward pro residues. Acidic residues predominate over residues 66-76 (SDLEDFSDETN). A Phosphoserine modification is found at serine 84. Basic residues predominate over residues 91–101 (QMKRMSTKHQR). Serine 431 bears the Phosphoserine mark. Threonine 447 is subject to Phosphothreonine. A phosphoserine mark is found at serine 456 and serine 457. The segment covering 456-466 (SSTDESEEEQI) has biased composition (acidic residues). Position 458 is a phosphothreonine (threonine 458). Serine 461, serine 481, and serine 499 each carry phosphoserine. 3 disordered regions span residues 1157–1190 (CHSD…GSPA), 1202–1231 (ASRP…SVPE), and 1244–1274 (FRSL…TRRS). Over residues 1217 to 1230 (SISSAHDTRGSSVP) the composition is skewed to polar residues. A phosphoserine mark is found at serine 1252 and serine 1274. Basic and acidic residues predominate over residues 1252 to 1261 (SPTEERDEPA). The region spanning 1343–1601 (WQRGNKIGEG…ASQLLDHSFV (259 aa)) is the Protein kinase domain. Residues 1349-1357 (IGEGQYGKV) and lysine 1372 contribute to the ATP site. The active-site Proton acceptor is the aspartate 1463.

It belongs to the protein kinase superfamily. STE Ser/Thr protein kinase family. MAP kinase kinase kinase subfamily. Monomer and homodimer. Homodimerization enhances kinase activity. Interacts with TRAF4; this promotes homodimerization. Binds both upstream activators and downstream substrates in multimolecular complexes. Interacts with AXIN1 and DIXDC1; interaction with DIXDC1 prevents interaction with AXIN1. Interacts with GADD45 and MAP2K6. Interacts with ZFP36; this interaction enhances the association with SH3KBP1/CIN85. Interacts with SH3KBP1; this interaction enhances the association with ZFP36. Interacts with CDC42. It depends on Mg(2+) as a cofactor. As to expression, expressed at high levels in heart, placenta, skeletal muscle and pancreas, and at lower levels in other tissues.

It is found in the cytoplasm. It localises to the perinuclear region. It catalyses the reaction L-seryl-[protein] + ATP = O-phospho-L-seryl-[protein] + ADP + H(+). The enzyme catalyses L-threonyl-[protein] + ATP = O-phospho-L-threonyl-[protein] + ADP + H(+). N-terminal autoinhibitory domain interacts with the C-terminal kinase domain, inhibiting kinase activity, and preventing interaction with its substrate, MAP2K6. The GADD45 proteins activate the kinase by binding to the N-terminal domain. Activated by phosphorylation on Thr-1505. Its function is as follows. Component of a protein kinase signal transduction cascade. Activates the CSBP2, P38 and JNK MAPK pathways, but not the ERK pathway. Specifically phosphorylates and activates MAP2K4 and MAP2K6. The chain is Mitogen-activated protein kinase kinase kinase 4 (MAP3K4) from Homo sapiens (Human).